We begin with the raw amino-acid sequence, 305 residues long: NAD kinase 2 (305 aa).

Catalysis depends on Asp-78, which acts as the Proton acceptor. NAD(+)-binding positions include 78-79, 152-153, Asp-182, 193-198, and Asn-251; these read DG, NE, and TAYSLS.

The protein belongs to the NAD kinase family. A divalent metal cation is required as a cofactor.

Its subcellular location is the cytoplasm. The catalysed reaction is NAD(+) + ATP = ADP + NADP(+) + H(+). Involved in the regulation of the intracellular balance of NAD and NADP, and is a key enzyme in the biosynthesis of NADP. Catalyzes specifically the phosphorylation on 2'-hydroxyl of the adenosine moiety of NAD to yield NADP. This is NAD kinase 2 from Trichormus variabilis (strain ATCC 29413 / PCC 7937) (Anabaena variabilis).